Here is a 417-residue protein sequence, read N- to C-terminus: Phosphoglycerate kinase 1 (417 aa).

S2 is modified (N-acetylserine). Phosphoserine occurs at positions 2 and 4. Residue K6 is modified to N6-succinyllysine. K11 is subject to N6-acetyllysine. V23, D24, F25, N26, Q38, and R39 together coordinate (2R)-3-phosphoglycerate. Residues 38 to 43 (QRIKAA) form a mitochondrial targeting region exposed following cis-trans isomerization by PIN1 and recognized by the TOM complex for mitochondrial translocation of the protein region. An N6-acetyllysine; alternate modification is found at K48. Position 48 is an N6-succinyllysine; alternate (K48). (2R)-3-phosphoglycerate-binding residues include S62, H63, G65, and R66. Position 75 is an N6-acetyllysine (K75). Phosphotyrosine is present on Y76. An N6-acetyllysine mark is found at K86 and K91. N6-acetyllysine; alternate is present on K97. K97 carries the N6-(2-hydroxyisobutyryl)lysine; alternate modification. (2R)-3-phosphoglycerate-binding residues include L122 and R123. K131 is modified (N6-acetyllysine; alternate). Residue K131 is modified to N6-malonyllysine; alternate. An N6-acetyllysine modification is found at K146. Positions 170 and 171 each coordinate (2R)-3-phosphoglycerate. K191 carries the post-translational modification N6-succinyllysine. Position 196 is a phosphotyrosine (Y196). K199 carries the post-translational modification N6-acetyllysine. A Phosphoserine modification is found at S203. G214 lines the ADP pocket. Residue G214 coordinates CDP. AMP-binding residues include A215 and K216. ATP is bound at residue A215. Residue A215 participates in Mg(2+) binding. K216 is subject to N6-(2-hydroxyisobutyryl)lysine. Residues A218 and D219 each coordinate Mg(2+). D219 contributes to the CDP binding site. K220 lines the AMP pocket. Position 220 (K220) interacts with ATP. K220 is subject to N6-(2-hydroxyisobutyryl)lysine. Position 238 (G238) interacts with ADP. G238 is a binding site for CDP. G239 contacts AMP. G239 contributes to the ATP binding site. An N6-acetyllysine mark is found at K267 and K291. Residue G313 coordinates AMP. Residue G313 participates in ATP binding. An N6-(2-hydroxyisobutyryl)lysine modification is found at K323. Residues G338, V340, and F343 each coordinate CDP. F343 lines the ADP pocket. E344 is a binding site for AMP. Residue E344 participates in ATP binding. At K361 the chain carries N6-acetyllysine. 2 residues coordinate ATP: D375 and T376. Residue D375 coordinates Mg(2+).

Belongs to the phosphoglycerate kinase family. As to quaternary structure, monomer. Interacts with kinase MAPK1/ERK2; the interaction is direct, occurs under hypoxic conditions, and promotes its interaction with PIN1. Interacts with peptidyl-prolyl cis-trans isomerase PIN1; the interaction is direct, occurs under hypoxic conditions, and targets the protein to the mitochondrion by promoting interactions with the TOM complex. Interacts with mitochondrial circRNA mcPGK1 (via its 2nd stem-loop); the interaction is direct and targets the protein to the mitochondrion by promoting interactions with the TOM complex. Interacts with pyruvate dehydrogenase kinase PDK1; the interaction is direct, occurs under hypoxic conditions and leads to PDK1-mediated inhibition of pyruvate dehydrogenase complex activity. Requires Mg(2+) as cofactor. Post-translationally, phosphorylated at Ser-203 by MAPK1/ERK2 under hypoxic conditions, which promotes its mitochondrial targeting.

The protein localises to the cytoplasm. The protein resides in the cytosol. It is found in the mitochondrion matrix. It catalyses the reaction (2R)-3-phosphoglycerate + ATP = (2R)-3-phospho-glyceroyl phosphate + ADP. The enzyme catalyses L-seryl-[protein] + ATP = O-phospho-L-seryl-[protein] + ADP + H(+). Its pathway is carbohydrate degradation; glycolysis; pyruvate from D-glyceraldehyde 3-phosphate: step 2/5. Catalyzes one of the two ATP producing reactions in the glycolytic pathway via the reversible conversion of 1,3-diphosphoglycerate to 3-phosphoglycerate. Both L- and D- forms of purine and pyrimidine nucleotides can be used as substrates, but the activity is much lower on pyrimidines. In addition to its role as a glycolytic enzyme, it seems that PGK-1 acts as a polymerase alpha cofactor protein (primer recognition protein). Acts as a protein kinase when localized to the mitochondrion where it phosphorylates pyruvate dehydrogenase kinase PDK1 to inhibit pyruvate dehydrogenase complex activity and suppress the formation of acetyl-coenzyme A from pyruvate, and consequently inhibit oxidative phosphorylation and promote glycolysis. May play a role in sperm motility. The protein is Phosphoglycerate kinase 1 (PGK1) of Sus scrofa (Pig).